The chain runs to 261 residues: tRNA pseudouridine synthase A (261 aa).

Asp-51 acts as the Nucleophile in catalysis. Tyr-109 contributes to the substrate binding site.

The protein belongs to the tRNA pseudouridine synthase TruA family. In terms of assembly, homodimer.

It catalyses the reaction uridine(38/39/40) in tRNA = pseudouridine(38/39/40) in tRNA. Its function is as follows. Formation of pseudouridine at positions 38, 39 and 40 in the anticodon stem and loop of transfer RNAs. This chain is tRNA pseudouridine synthase A, found in Methylobacillus flagellatus (strain ATCC 51484 / DSM 6875 / VKM B-1610 / KT).